A 232-amino-acid polypeptide reads, in one-letter code: Phosphatidylserine decarboxylase proenzyme (232 aa).

Ser-190 acts as the Schiff-base intermediate with substrate; via pyruvic acid in catalysis. Ser-190 carries the post-translational modification Pyruvic acid (Ser); by autocatalysis.

Belongs to the phosphatidylserine decarboxylase family. PSD-A subfamily. In terms of assembly, heterodimer of a large membrane-associated beta subunit and a small pyruvoyl-containing alpha subunit. Requires pyruvate as cofactor. Post-translationally, is synthesized initially as an inactive proenzyme. Formation of the active enzyme involves a self-maturation process in which the active site pyruvoyl group is generated from an internal serine residue via an autocatalytic post-translational modification. Two non-identical subunits are generated from the proenzyme in this reaction, and the pyruvate is formed at the N-terminus of the alpha chain, which is derived from the carboxyl end of the proenzyme. The post-translation cleavage follows an unusual pathway, termed non-hydrolytic serinolysis, in which the side chain hydroxyl group of the serine supplies its oxygen atom to form the C-terminus of the beta chain, while the remainder of the serine residue undergoes an oxidative deamination to produce ammonia and the pyruvoyl prosthetic group on the alpha chain.

The protein localises to the cell membrane. The catalysed reaction is a 1,2-diacyl-sn-glycero-3-phospho-L-serine + H(+) = a 1,2-diacyl-sn-glycero-3-phosphoethanolamine + CO2. It functions in the pathway phospholipid metabolism; phosphatidylethanolamine biosynthesis; phosphatidylethanolamine from CDP-diacylglycerol: step 2/2. Catalyzes the formation of phosphatidylethanolamine (PtdEtn) from phosphatidylserine (PtdSer). This is Phosphatidylserine decarboxylase proenzyme from Rhizobium rhizogenes (strain K84 / ATCC BAA-868) (Agrobacterium radiobacter).